A 361-amino-acid polypeptide reads, in one-letter code: MSSLPVSESEGEGSGTSVQVPSRGGQVTPGEKAFSLRTKHVFLTYPRCPISPEEAGQKIADRLKNKKCNYIYISREFHADGEPHLHAFVQLEANFRTTSPKYFDLDEFHPNIQAARQPASTLKYCMKHPESSWEFGKFLKPKVNRSPTQSASRDKTMKQIMANATSRDEYLSMVRKSFPFEWAVRLQQFQYSANALFPDPPQTYSAPYASRDMSDHPVIGEWLQQELYTWSPGVRRRSLYICGPTRTGKTSWARSLGTHHYWQHSVNFLEEWNCQAQFNIIDDIPFKFVPCWKGLVGSQYDLTVNPKYGKKKRIPNGIPCIILVNEDEDWLQSMSTQQVDWFHGNAVVYHLLPGETFIPSE.

A disordered region spans residues 1 to 31; it reads MSSLPVSESEGEGSGTSVQVPSRGGQVTPGE. One can recognise a CRESS-DNA virus Rep endonuclease domain in the interval 35-138; it reads SLRTKHVFLT…PESSWEFGKF (104 aa). The RCR-1 motif lies at 42-45; the sequence is FLTY. Positions 76, 84, and 86 each coordinate a divalent metal cation. An RCR-2 motif is present at residues 84–86; that stretch reads HLH. Residue Tyr124 is the For DNA cleavage activity of the active site. Positions 124-127 match the RCR-3 motif; sequence YCMK. Residues 192–204 form an oligomerization region; that stretch reads SANALFPDPPQTY. 243–250 provides a ligand contact to ATP; the sequence is GPTRTGKT. The transactivation stretch occupies residues 266–285; the sequence is VNFLEEWNCQAQFNIIDDIP. Positions 307–317 match the Nuclear localization signal motif; it reads KYGKKKRIPNG.

The protein belongs to the geminiviridae Rep protein family. In terms of assembly, homooligomer. Rep binds to repeated DNA motifs (iterons). Forms the O-complex, which is a Rep-DNA complex involved in the initiation of RCR. Part of the C- and V-complexes which are RepA-Rep-DNA complexes involved in the c-sense and v-sense transcription. The cofactor is Mg(2+). Mn(2+) is required as a cofactor.

The protein localises to the host nucleus. Essential for the replication of viral ssDNA. The closed circular ssDNA genome is first converted to a superhelical dsDNA. Rep binds a specific region at the genome origin of replication. It introduces an endonucleolytic nick within the conserved sequence 5'-TAATATTAC-3' in the intergenic region of the genome present in all geminiviruses, thereby initiating the rolling circle replication (RCR). Following cleavage, binds covalently to the 5'-phosphate of DNA as a tyrosyl ester. The cleavage gives rise to a free 3'-OH that serves as a primer for the cellular DNA polymerase. The polymerase synthesizes the (+) strand DNA by rolling circle mechanism. After one round of replication, a Rep-catalyzed nucleotidyl transfer reaction releases a circular single-stranded virus genome, thereby terminating the replication. Displays origin-specific DNA cleavage, nucleotidyl transferase, ATPase and helicase activities. Acts as an inhibitor of C-sense gene transcription. This is Replication-associated protein from Avena sativa (Oat).